The sequence spans 888 residues: Alanine--tRNA ligase (888 aa).

Zn(2+) contacts are provided by His-564, His-568, Cys-676, and His-680.

This sequence belongs to the class-II aminoacyl-tRNA synthetase family. It depends on Zn(2+) as a cofactor.

It is found in the cytoplasm. The enzyme catalyses tRNA(Ala) + L-alanine + ATP = L-alanyl-tRNA(Ala) + AMP + diphosphate. Its function is as follows. Catalyzes the attachment of alanine to tRNA(Ala) in a two-step reaction: alanine is first activated by ATP to form Ala-AMP and then transferred to the acceptor end of tRNA(Ala). Also edits incorrectly charged Ser-tRNA(Ala) and Gly-tRNA(Ala) via its editing domain. The protein is Alanine--tRNA ligase of Mesorhizobium japonicum (strain LMG 29417 / CECT 9101 / MAFF 303099) (Mesorhizobium loti (strain MAFF 303099)).